Reading from the N-terminus, the 675-residue chain is Metal-nicotianamine transporter YSL3 (675 aa).

The next 14 helical transmembrane spans lie at 42-62 (ITFR…VIVM), 66-86 (LTTG…FVFL), 114-134 (CAVA…LLGL), 159-179 (GIGW…LALV), 219-239 (VFGF…QWFF), 280-300 (IVNI…WPLI), 325-345 (VFIS…KILF), 386-406 (IPLW…IIAI), 408-428 (IMFP…APSL), 450-470 (VALF…AGLV), 504-524 (VSQA…FFLF), 556-576 (FSAL…FAVA), 602-622 (FLVG…VFAW), and 630-650 (AGLM…LWIL).

The protein belongs to the YSL (TC 2.A.67.2) family. As to expression, expressed in leaves, anthers and pollen grains. Restricted to the vasculature.

It localises to the membrane. Its function is as follows. May be involved in the lateral transport of nicotianamine-chelated metals in the vasculature. This Arabidopsis thaliana (Mouse-ear cress) protein is Metal-nicotianamine transporter YSL3 (YSL3).